The following is a 351-amino-acid chain: Protein-glutamate methylesterase/protein-glutamine glutaminase (351 aa).

One can recognise a Response regulatory domain in the interval 3–120; sequence KTLVVDDSAL…EISKIENELV (118 aa). D54 carries the post-translational modification 4-aspartylphosphate. The CheB-type methylesterase domain occupies 160–347; the sequence is ILIGSSTGGP…EQIVRMIEVK (188 aa). Residues S165, H192, and D289 contribute to the active site.

The protein belongs to the CheB family. Phosphorylated by CheA. Phosphorylation of the N-terminal regulatory domain activates the methylesterase activity.

It is found in the cytoplasm. It catalyses the reaction [protein]-L-glutamate 5-O-methyl ester + H2O = L-glutamyl-[protein] + methanol + H(+). The enzyme catalyses L-glutaminyl-[protein] + H2O = L-glutamyl-[protein] + NH4(+). In terms of biological role, involved in chemotaxis. Part of a chemotaxis signal transduction system that modulates chemotaxis in response to various stimuli. Catalyzes the demethylation of specific methylglutamate residues introduced into the chemoreceptors (methyl-accepting chemotaxis proteins or MCP) by CheR. Also mediates the irreversible deamidation of specific glutamine residues to glutamic acid. The chain is Protein-glutamate methylesterase/protein-glutamine glutaminase from Methanococcoides burtonii (strain DSM 6242 / NBRC 107633 / OCM 468 / ACE-M).